Consider the following 292-residue polypeptide: N-acetylneuraminate lyase (292 aa).

The aceneuramate site is built by Ser47 and Thr48. The active-site Proton donor is Tyr136. Catalysis depends on Lys164, which acts as the Schiff-base intermediate with substrate. Positions 166, 188, 190, 191, and 207 each coordinate aceneuramate.

The protein belongs to the DapA family. NanA subfamily. Homotetramer.

Its subcellular location is the cytoplasm. The catalysed reaction is aceneuramate = aldehydo-N-acetyl-D-mannosamine + pyruvate. Its pathway is amino-sugar metabolism; N-acetylneuraminate degradation; D-fructose 6-phosphate from N-acetylneuraminate: step 1/5. In terms of biological role, catalyzes the reversible aldol cleavage of N-acetylneuraminic acid (sialic acid; Neu5Ac) to form pyruvate and N-acetylmannosamine (ManNAc) via a Schiff base intermediate. The protein is N-acetylneuraminate lyase of Actinobacillus pleuropneumoniae serotype 3 (strain JL03).